Reading from the N-terminus, the 458-residue chain is Probable Xaa-Pro aminopeptidase pepP (458 aa).

Mn(2+) contacts are provided by aspartate 254, aspartate 265, glutamate 388, and glutamate 428.

This sequence belongs to the peptidase M24B family. The cofactor is Mn(2+).

The enzyme catalyses Release of any N-terminal amino acid, including proline, that is linked to proline, even from a dipeptide or tripeptide.. In terms of biological role, catalyzes the removal of a penultimate prolyl residue from the N-termini of peptides. In Botryotinia fuckeliana (strain B05.10) (Noble rot fungus), this protein is Probable Xaa-Pro aminopeptidase pepP (pepP).